The following is a 309-amino-acid chain: Ribosomal RNA small subunit methyltransferase H (309 aa).

S-adenosyl-L-methionine contacts are provided by residues 33–35 (GGH), Asp53, Phe79, Asp100, and Gln107.

Belongs to the methyltransferase superfamily. RsmH family.

It is found in the cytoplasm. The catalysed reaction is cytidine(1402) in 16S rRNA + S-adenosyl-L-methionine = N(4)-methylcytidine(1402) in 16S rRNA + S-adenosyl-L-homocysteine + H(+). Its function is as follows. Specifically methylates the N4 position of cytidine in position 1402 (C1402) of 16S rRNA. The polypeptide is Ribosomal RNA small subunit methyltransferase H (Clostridium botulinum (strain Loch Maree / Type A3)).